Consider the following 148-residue polypeptide: Copper transport protein ctr6 (148 aa).

The Extracellular segment spans residues 1–33 (MNHGGNSTMRHCSMKMTFNTDYDNLCIVFKSWH). A helical membrane pass occupies residues 34-54 (IGNLSQFLLSLLAIAILGYLF). Topologically, residues 55-108 (ERLRSFTSLKETEFQRGYAGQQSEGLLTHHSKSLKSGRPFRLCALYAVQLVFSY) are cytoplasmic. A helical membrane pass occupies residues 109–129 (FLMLVAMTYNAYVILAIAIGA). At 130 to 148 (AFGYRRSHCDTVQTVGLCH) the chain is on the extracellular side.

This sequence belongs to the copper transporter (Ctr) (TC 1.A.56) family. SLC31A subfamily. Homotrimer.

It localises to the vacuole membrane. Functionally, mobilizes stored copper from the vacuole to the cytoplasm under conditions of copper limitation. The chain is Copper transport protein ctr6 (ctr6) from Schizosaccharomyces pombe (strain 972 / ATCC 24843) (Fission yeast).